Consider the following 255-residue polypeptide: Uridylate kinase (255 aa).

Residues 1 to 21 are disordered; the sequence is MSAAAAGRGERLNHAGNPGHR. 30-33 provides a ligand contact to ATP; sequence KLGG. Residue Gly71 coordinates UMP. The ATP site is built by Gly72 and Arg76. Residues Asp91 and 152 to 159 each bind UMP; that span reads MGLPYFST. Positions 185 and 188 each coordinate ATP.

The protein belongs to the UMP kinase family. Homohexamer.

It localises to the cytoplasm. The enzyme catalyses UMP + ATP = UDP + ADP. It functions in the pathway pyrimidine metabolism; CTP biosynthesis via de novo pathway; UDP from UMP (UMPK route): step 1/1. With respect to regulation, inhibited by UTP. Its function is as follows. Catalyzes the reversible phosphorylation of UMP to UDP. This Mycobacterium leprae (strain TN) protein is Uridylate kinase.